The chain runs to 22 residues: Brevinin-2LTa (22 aa).

In terms of tissue distribution, expressed by the skin glands.

Its subcellular location is the secreted. Functionally, has antibacterial activity. The chain is Brevinin-2LTa from Rana latastei (Italian agile frog).